Consider the following 260-residue polypeptide: MQRNSLIGDTIRSLGFLSRLPLPQRWFEDGDDSLPRNARAFPLAGAVLGLLAGAVLFMAYKVNLPPLACAMLAIGALAAMTGALHEDGLGDTADGFFGASSPDRRLDIMKDSRIGTFAALTLIVFVGLKAALLMTIIDRAGAGYAALALVGCEAASRSGMLAFWHALPSARPGGLSDSVGQPQWETVVCGFGIGLAFLVFTLIPAGGFLSLINALVLATGLLFGFARLCIAKIGGQTGDTLGAAQQIGSVAVLAGLVMAL.

A run of 6 helical transmembrane segments spans residues 40-60 (AFPL…FMAY), 64-84 (LPPL…TGAL), 117-137 (FAAL…MTII), 192-212 (GIGL…LSLI), 214-234 (ALVL…AKIG), and 240-260 (TLGA…VMAL).

Belongs to the CobS family. Requires Mg(2+) as cofactor.

The protein localises to the cell inner membrane. It carries out the reaction alpha-ribazole + adenosylcob(III)inamide-GDP = adenosylcob(III)alamin + GMP + H(+). The catalysed reaction is alpha-ribazole 5'-phosphate + adenosylcob(III)inamide-GDP = adenosylcob(III)alamin 5'-phosphate + GMP + H(+). It participates in cofactor biosynthesis; adenosylcobalamin biosynthesis; adenosylcobalamin from cob(II)yrinate a,c-diamide: step 7/7. Its function is as follows. Joins adenosylcobinamide-GDP and alpha-ribazole to generate adenosylcobalamin (Ado-cobalamin). Also synthesizes adenosylcobalamin 5'-phosphate from adenosylcobinamide-GDP and alpha-ribazole 5'-phosphate. In Brucella anthropi (strain ATCC 49188 / DSM 6882 / CCUG 24695 / JCM 21032 / LMG 3331 / NBRC 15819 / NCTC 12168 / Alc 37) (Ochrobactrum anthropi), this protein is Adenosylcobinamide-GDP ribazoletransferase.